The sequence spans 140 residues: Small ribosomal subunit protein uS19 (140 aa).

This sequence belongs to the universal ribosomal protein uS19 family.

In terms of biological role, protein S19 forms a complex with S13 that binds strongly to the 16S ribosomal RNA. The protein is Small ribosomal subunit protein uS19 (rps19) of Saccharolobus solfataricus (strain ATCC 35092 / DSM 1617 / JCM 11322 / P2) (Sulfolobus solfataricus).